The sequence spans 488 residues: MQYRDLRDFIRGLEQRGELKRIQVPISPVLEMTEVCDRTLRAKGPALLFEKPTGFDIPVLGNLFGTPERVAMGMGAESVSELREIGKLLAFLKEPEPPKGLKDAWSKLPIFKKVVSMAPKVVKDAVCQEVVVEGDDVDLGTLPIQHCWPGDVAPLITWGLTVTRGPNKDRQNLGIYRQQVIGRNKVIMRWLSHRGGALDYREWCEKNPGQPFPVAVALGADPATILGAVTPVPDTLSEYAFAGLLRGNRTELVKCRGSNLQVPATAEIILEGVIHPGEMAPEGPYGDHTGYYNEVDSFPVFTVERITHRQKPIYHSTYTGRPPDEPAILGVALNEVFVPILQKQFPEITDFYLPPEGCSYRMAVVTMKKQYPGHAKRVMLGVWSFLRQFMYTKFVIVTDDDINARDWNDVIWAITTRMDPKRDTVMIDNTPIDYLDFASPVSGLGSKMGLDATHKWPGETTREWGRVIVKDEAVTRRIDELWDQLGID.

Asparagine 172 is a binding site for Mn(2+). Prenylated FMN-binding positions include isoleucine 175–arginine 177, arginine 189–leucine 191, and arginine 194–glycine 195. Glutamate 238 is a binding site for Mn(2+). Aspartate 287 serves as the catalytic Proton donor.

This sequence belongs to the UbiD family. As to quaternary structure, homohexamer. Prenylated FMN is required as a cofactor. It depends on Mn(2+) as a cofactor.

It localises to the cell membrane. The catalysed reaction is a 4-hydroxy-3-(all-trans-polyprenyl)benzoate + H(+) = a 2-(all-trans-polyprenyl)phenol + CO2. Its pathway is cofactor biosynthesis; ubiquinone biosynthesis. Its function is as follows. Catalyzes the decarboxylation of 3-octaprenyl-4-hydroxy benzoate to 2-octaprenylphenol, an intermediate step in ubiquinone biosynthesis. This Pseudomonas putida (strain ATCC 47054 / DSM 6125 / CFBP 8728 / NCIMB 11950 / KT2440) protein is 3-octaprenyl-4-hydroxybenzoate carboxy-lyase.